The primary structure comprises 127 residues: DNA-directed RNA polymerase subunit omega (127 aa).

This sequence belongs to the RNA polymerase subunit omega family. In terms of assembly, the RNAP catalytic core consists of 2 alpha, 1 beta, 1 beta' and 1 omega subunit. When a sigma factor is associated with the core the holoenzyme is formed, which can initiate transcription.

It carries out the reaction RNA(n) + a ribonucleoside 5'-triphosphate = RNA(n+1) + diphosphate. Functionally, promotes RNA polymerase assembly. Latches the N- and C-terminal regions of the beta' subunit thereby facilitating its interaction with the beta and alpha subunits. This chain is DNA-directed RNA polymerase subunit omega, found in Rickettsia peacockii (strain Rustic).